Reading from the N-terminus, the 362-residue chain is Somatostatin receptor type 5 (362 aa).

The span at 1–10 shows a compositional bias: polar residues; that stretch reads MEPLSLTSTP. A disordered region spans residues 1 to 24; that stretch reads MEPLSLTSTPSWNASAASSSSHNW. Topologically, residues 1 to 35 are extracellular; sequence MEPLSLTSTPSWNASAASSSSHNWSLVDPVSPMGA. A compositionally biased stretch (low complexity) spans 11-24; it reads SWNASAASSSSHNW. 2 N-linked (GlcNAc...) asparagine glycosylation sites follow: N13 and N23. Residues 36-63 traverse the membrane as a helical segment; sequence RAVLVPVLYLLVCTVGLGGNTLVIYVVL. The Cytoplasmic portion of the chain corresponds to 64-73; sequence RYAKMKTVTN. A helical membrane pass occupies residues 74–99; that stretch reads VYILNLAVADVLFMLGLPFLATQNAV. Residues 100 to 110 are Extracellular-facing; the sequence is SYWPFGSFLCR. C109 and C184 are disulfide-bonded. A helical membrane pass occupies residues 111–132; it reads LVMTLDGINQFTSIFCLMVMSV. Residues 133–154 are Cytoplasmic-facing; the sequence is DRYLAVVHPLRSARWRRPRVAK. Residues 155–175 traverse the membrane as a helical segment; the sequence is LASAAVWVFSLLMSLPLLVFA. Over 176 to 195 the chain is Extracellular; that stretch reads DVQEGWGTCNLSWPEPVGLW. The N-linked (GlcNAc...) asparagine glycan is linked to N185. A helical membrane pass occupies residues 196-220; it reads GAAFITYTSVLGFFGPLLVICLCYL. At 221–246 the chain is on the cytoplasmic side; sequence LIVVKVKAAGMRVGSSRRRRSERKVT. The chain crosses the membrane as a helical span at residues 247 to 272; sequence RMVVVVVLVFVGCWLPFFIVNIVNLA. The Extracellular segment spans residues 273-282; the sequence is FTLPEEPTSA. The chain crosses the membrane as a helical span at residues 283–307; it reads GLYFFVVVLSYANSCANPLLYGFLS. Over 308-362 the chain is Cytoplasmic; the sequence is DNFRQSFRKALCLRRGYGVEDADAIEPRPDKSGRPQTTLPTRSCEANGLMQTSRL. Residue C319 is the site of S-palmitoyl cysteine; by ZDHHC5 attachment. The interval 330–362 is disordered; it reads DAIEPRPDKSGRPQTTLPTRSCEANGLMQTSRL.

This sequence belongs to the G-protein coupled receptor 1 family. Heterodimer with SSTR2. Heterodimerization with SSTR2 increases cell growth inhibition activity of SSTR2. Palmitoylated at Cys-319 by ZDHHC5, but not ZDHHC8. Palmitoylation creates an additional intracellular loop which is thought to be important for efficient coupling to G-proteins and may target the protein to lipid rafts. Expressed in adult brain but not in liver, heart, spleen, or kidney.

The protein localises to the cell membrane. Functionally, receptor for somatostatin-28. The activity of this receptor is mediated by G proteins which inhibit adenylyl cyclase. Increases cell growth inhibition activity of SSTR2 following heterodimerization. This is Somatostatin receptor type 5 (Sstr5) from Mus musculus (Mouse).